Here is a 315-residue protein sequence, read N- to C-terminus: Methionyl-tRNA formyltransferase (315 aa).

113–116 (SILP) is a binding site for (6S)-5,6,7,8-tetrahydrofolate.

It belongs to the Fmt family.

The catalysed reaction is L-methionyl-tRNA(fMet) + (6R)-10-formyltetrahydrofolate = N-formyl-L-methionyl-tRNA(fMet) + (6S)-5,6,7,8-tetrahydrofolate + H(+). In terms of biological role, attaches a formyl group to the free amino group of methionyl-tRNA(fMet). The formyl group appears to play a dual role in the initiator identity of N-formylmethionyl-tRNA by promoting its recognition by IF2 and preventing the misappropriation of this tRNA by the elongation apparatus. The chain is Methionyl-tRNA formyltransferase from Vibrio vulnificus (strain CMCP6).